The primary structure comprises 279 residues: Zinc finger AN1 and C2H2 domain-containing stress-associated protein 11 (279 aa).

AN1-type zinc fingers lie at residues proline 7 to valine 55 and alanine 95 to phenylalanine 145. The Zn(2+) site is built by cysteine 13, cysteine 18, cysteine 28, cysteine 31, cysteine 36, histidine 39, histidine 45, cysteine 47, cysteine 101, cysteine 106, cysteine 118, cysteine 121, cysteine 126, histidine 129, histidine 135, and cysteine 137. The tract at residues serine 152–arginine 178 is disordered. Over residues serine 169–arginine 178 the composition is skewed to low complexity. 2 C2H2-type zinc fingers span residues glutamate 213–histidine 236 and aspartate 250–histidine 273.

May be involved in environmental stress response. The sequence is that of Zinc finger AN1 and C2H2 domain-containing stress-associated protein 11 (SAP11) from Arabidopsis thaliana (Mouse-ear cress).